Here is a 407-residue protein sequence, read N- to C-terminus: E3 ubiquitin-protein ligase TRIM13 (407 aa).

Residues 10–58 (CPICCSLFDDPRVLPCSHNFCKKCLEGILEGSVRNSLWRPAPFKCPTCR) form an RING-type zinc finger. The B box-type zinc-finger motif lies at 89–131 (PKMPVCKGHLGQPLNIFCLTDMQLICGICATRGEHTKHVFCSI). Residues C94, H97, C117, and H123 each coordinate Zn(2+). Positions 172 to 200 (LQLLTKDSDKVKEFFEKLQHTLDQKKNEI) form a coiled coil. The chain crosses the membrane as a helical span at residues 317–337 (LFLLILLLGLVIVFGPTMFLE).

The protein belongs to the TRIM/RBCC family. In terms of assembly, interacts (via C-terminal domain) with VCP. Interacts with AKT1; the interaction ubiquitinates AKT1 and leads to its proteasomal degradation. Interacts with MDM2; the interaction ubiquitinates AKT1 and leads to its proteasomal degradation. Interacts with p62/SQSTM1. Interacts with TRAF6. Interacts with IKBKG/NEMO. Post-translationally, auto-ubiquitinated; requires the RING-type zinc finger. Auto-polyubiquitination leads to proteasomal degradation.

It is found in the endoplasmic reticulum membrane. It catalyses the reaction S-ubiquitinyl-[E2 ubiquitin-conjugating enzyme]-L-cysteine + [acceptor protein]-L-lysine = [E2 ubiquitin-conjugating enzyme]-L-cysteine + N(6)-ubiquitinyl-[acceptor protein]-L-lysine.. The protein operates within protein modification; protein ubiquitination. Functionally, endoplasmic reticulum (ER) membrane anchored E3 ligase involved in the retrotranslocation and turnover of membrane and secretory proteins from the ER through a set of processes named ER-associated degradation (ERAD). This process acts on misfolded proteins as well as in the regulated degradation of correctly folded proteins. Enhances ionizing radiation-induced p53/TP53 stability and apoptosis via ubiquitinating MDM2 and AKT1 and decreasing AKT1 kinase activity through MDM2 and AKT1 proteasomal degradation. Regulates ER stress-induced autophagy, and may act as a tumor suppressor. Also plays a role in innate immune response by stimulating NF-kappa-B activity in the TLR2 signaling pathway. Ubiquitinates TRAF6 via the 'Lys-29'-linked polyubiquitination chain resulting in NF-kappa-B activation. Participates as well in T-cell receptor-mediated NF-kappa-B activation. In the presence of TNF, modulates the IKK complex by regulating IKBKG/NEMO ubiquitination leading to the repression of NF-kappa-B. This is E3 ubiquitin-protein ligase TRIM13 (TRIM13) from Homo sapiens (Human).